The sequence spans 263 residues: Phosphatidylglycerol--prolipoprotein diacylglyceryl transferase (263 aa).

The next 4 helical transmembrane spans lie at 6–26, 50–70, 85–105, and 112–132; these read VIFS…VLGI, LLTA…VLIY, TWEG…AVII, and IPTF…LFLG. Arginine 133 contacts a 1,2-diacyl-sn-glycero-3-phospho-(1'-sn-glycerol). 3 helical membrane-spanning segments follow: residues 169–189, 197–217, and 233–253; these read LYEA…LFFL, GALT…VEFF, and MGQL…LGAL.

This sequence belongs to the Lgt family.

The protein localises to the cell membrane. It catalyses the reaction L-cysteinyl-[prolipoprotein] + a 1,2-diacyl-sn-glycero-3-phospho-(1'-sn-glycerol) = an S-1,2-diacyl-sn-glyceryl-L-cysteinyl-[prolipoprotein] + sn-glycerol 1-phosphate + H(+). The protein operates within protein modification; lipoprotein biosynthesis (diacylglyceryl transfer). Its function is as follows. Catalyzes the transfer of the diacylglyceryl group from phosphatidylglycerol to the sulfhydryl group of the N-terminal cysteine of a prolipoprotein, the first step in the formation of mature lipoproteins. The chain is Phosphatidylglycerol--prolipoprotein diacylglyceryl transferase from Wolbachia pipientis wMel.